The chain runs to 358 residues: E3 ubiquitin-protein ligase RFI2 (358 aa).

The tract at residues 1 to 34 (MAGAKDSGCDDDLRIAGGCDPGKRGNPEDSSSPV) is disordered. The RING-type; atypical zinc finger occupies 38–83 (CSICLESVLDDGTRSKAKLQCGHQFHLDCIGSAFNMKGAMQCPNCR). 2 disordered regions span residues 174–201 (GPAA…DHFH) and 248–313 (SNQR…DQNV). Basic and acidic residues predominate over residues 187-201 (TDDHPWNSHSNDHFH). Positions 248 to 266 (SNQRSSPAINSYQGSSTQM) are enriched in polar residues. A compositionally biased stretch (pro residues) spans 299–309 (LPPPPPPPPMP).

Its subcellular location is the nucleus. The catalysed reaction is S-ubiquitinyl-[E2 ubiquitin-conjugating enzyme]-L-cysteine + [acceptor protein]-L-lysine = [E2 ubiquitin-conjugating enzyme]-L-cysteine + N(6)-ubiquitinyl-[acceptor protein]-L-lysine.. Its pathway is protein modification; protein ubiquitination. Mediates phytochrome (phyA and phyB)-controlled seedling deetiolation responses such as hypocotyl elongation in response to red and far-red light. Required for light-induced expression of LHCB3 and CHALCONE SYNTHASE (CHS). Negatively regulates CONSTANS (CO) and FLOWERING LOCUS T (FT) expression and photoperiodic flowering. The polypeptide is E3 ubiquitin-protein ligase RFI2 (Arabidopsis thaliana (Mouse-ear cress)).